The chain runs to 127 residues: Large ribosomal subunit protein bL19 (127 aa).

This sequence belongs to the bacterial ribosomal protein bL19 family.

This protein is located at the 30S-50S ribosomal subunit interface and may play a role in the structure and function of the aminoacyl-tRNA binding site. In Trichodesmium erythraeum (strain IMS101), this protein is Large ribosomal subunit protein bL19.